We begin with the raw amino-acid sequence, 316 residues long: Golgi to ER traffic protein 2 (316 aa).

The segment at 1 to 75 is disordered; the sequence is MATELSDAEK…SDEEVEKSTK (75 aa). Residues 1 to 167 lie on the Cytoplasmic side of the membrane; it reads MATELSDAEK…LKYYKFKVSK (167 aa). Over residues 7-19 the composition is skewed to basic and acidic residues; the sequence is DAEKRKLLRERRQ. 2 stretches are compositionally biased toward polar residues: residues 22–48 and 56–65; these read FSNG…STSV and PSGNKKSSNV. Residues 168–187 traverse the membrane as a helical segment; sequence LKSYIILIKWALLAPYVYFI. Topologically, residues 188-209 are lumenal; sequence MHPNPTVLQASNLLSQIVERSN. The helical transmembrane segment at 210-229 threads the bilayer; that stretch reads FFSIFTGLEIVFISIYYQML. Residues 230 to 276 are Cytoplasmic-facing; the sequence is KKLQRDNNVTATQNAGGILKYLTMIPEGILPIRNIQGKIGLALEYFD. A helical transmembrane segment spans residues 277–297; it reads VASMYVTDICFVLVLFGVMKY. Topologically, residues 298–316 are lumenal; it reads YHSSFPISVPIEPPIAGIQ.

The protein belongs to the GET2 family. As to quaternary structure, component of the Golgi to ER traffic (GET) complex, which is composed of GET1, GET2 and GET3. Within the complex, GET1 and GET2 form a heterotetramer which is stabilized by phosphatidylinositol binding and which binds to the GET3 homodimer.

The protein localises to the endoplasmic reticulum membrane. It is found in the golgi apparatus membrane. Functionally, required for the post-translational delivery of tail-anchored (TA) proteins to the endoplasmic reticulum. Together with GET1, acts as a membrane receptor for soluble GET3, which recognizes and selectively binds the transmembrane domain of TA proteins in the cytosol. The GET complex cooperates with the HDEL receptor ERD2 to mediate the ATP-dependent retrieval of resident ER proteins that contain a C-terminal H-D-E-L retention signal from the Golgi to the ER. This is Golgi to ER traffic protein 2 from Kluyveromyces lactis (strain ATCC 8585 / CBS 2359 / DSM 70799 / NBRC 1267 / NRRL Y-1140 / WM37) (Yeast).